The following is a 358-amino-acid chain: Alanine racemase (358 aa).

The active-site Proton acceptor; specific for D-alanine is the K34. N6-(pyridoxal phosphate)lysine is present on K34. R129 provides a ligand contact to substrate. Y254 functions as the Proton acceptor; specific for L-alanine in the catalytic mechanism. Residue M302 participates in substrate binding.

It belongs to the alanine racemase family. The cofactor is pyridoxal 5'-phosphate.

It carries out the reaction L-alanine = D-alanine. It participates in amino-acid biosynthesis; D-alanine biosynthesis; D-alanine from L-alanine: step 1/1. Catalyzes the interconversion of L-alanine and D-alanine. May also act on other amino acids. This is Alanine racemase (alr) from Vibrio parahaemolyticus serotype O3:K6 (strain RIMD 2210633).